Consider the following 424-residue polypeptide: Histidine--tRNA ligase (424 aa).

It belongs to the class-II aminoacyl-tRNA synthetase family. In terms of assembly, homodimer.

It localises to the cytoplasm. It catalyses the reaction tRNA(His) + L-histidine + ATP = L-histidyl-tRNA(His) + AMP + diphosphate + H(+). The sequence is that of Histidine--tRNA ligase from Salmonella paratyphi B (strain ATCC BAA-1250 / SPB7).